Reading from the N-terminus, the 347-residue chain is Hyaluronidase conohyal-ad1 (347 aa).

The signal sequence occupies residues 1–18 (MRAVVVVTGLVVVVVTTT). Positions 19-33 (LSLQDHDVKSASSPL) are excised as a propeptide. Positions 27–49 (KSASSPLSSSVDQGSSGDDCDEG) are disordered. Residues 28–43 (SASSPLSSSVDQGSSG) are compositionally biased toward low complexity. An intrachain disulfide couples Cys67 to Cys343. Glu150 functions as the Proton donor in the catalytic mechanism.

Belongs to the glycosyl hydrolase 56 family. In terms of processing, contains 4 disulfide bonds. Post-translationally, is N-linked glycosylated at three positions. In terms of tissue distribution, expressed by the venom duct.

It localises to the secreted. The enzyme catalyses Random hydrolysis of (1-&gt;4)-linkages between N-acetyl-beta-D-glucosamine and D-glucuronate residues in hyaluronate.. In terms of biological role, hyaluronidase catalyzes the hydrolysis of hyaluronic acid (HA), an anionic, nonsulfated glycosaminoglycan distributed widely throughout connective, epithelial, and neural tissues. In venom, they are known to enhance diffusion of the venom by degrading the extracellular matrix. The polypeptide is Hyaluronidase conohyal-ad1 (Conus adamsonii (Rhododendron cone)).